A 170-amino-acid polypeptide reads, in one-letter code: Neurotensin/neuromedin N (170 aa).

The first 23 residues, 1–23, serve as a signal peptide directing secretion; the sequence is MMAGMKIQLVCMILLAFSSWSLC.

This sequence belongs to the neurotensin family. As to quaternary structure, interacts with NTSR1. Interacts with SORT1. Interacts with SORL1. Neurotensin is cleaved and degraded by Angiotensin-converting enzyme (ACE) and neprilysin (MME).

The protein resides in the secreted. It is found in the cytoplasmic vesicle. The protein localises to the secretory vesicle. Its function is as follows. Neurotensin may play an endocrine or paracrine role in the regulation of fat metabolism. It causes contraction of smooth muscle. The sequence is that of Neurotensin/neuromedin N (NTS) from Canis lupus familiaris (Dog).